The following is a 553-amino-acid chain: Major facilitator-type transporter hxnZ (553 aa).

A run of 5 helical transmembrane segments spans residues 89–109 (FTVAGFGWIVDNFCSQGISAV), 128–148 (VAYYVGMIIGASFWGISSDLI), 152–172 (PAFNSTLAIAGIFLCAAAGTS), 174–194 (FIAFSALWAVIGTAAGGNVVC), and 213–233 (ALSGWWNLGQLVVSLLAWVFL). The N-linked (GlcNAc...) asparagine glycan is linked to Asn-235. The next 7 membrane-spanning stretches (helical) occupy residues 257–277 (YTLITLGGLSLAFTFVRIFVF), 366–386 (ALIWAVWLIIGIAYPLYFNFL), 409–429 (IQSAVGVVGPLSAAVLVNTFL), 433–453 (WMMGISSIVTGVFLFAYVGVK), 459–481 (LAFSCVTGLLANFANQLSEYAIM), 496–516 (TASGTAASLLRFGGLVASLIA), and 525–545 (PIYASAALWVGVGVLCFGLPF).

Belongs to the major facilitator superfamily.

Its subcellular location is the cell membrane. In terms of biological role, major facilitator-type transporter, part of the hnx cluster involved in the purine degradation. The nicotinate hydroxylase hnxS accepts nicotinate as a substrate and catalyzes the first step of nicotinate catabolism. The major facilitator-type transporters hxnP and hxnZ are probably involved in the uptake of nicotinate-derived metabolites, and the oxidoreductases hxnT and hxnY in the further metabolism of 6-OH nicotinic acid. The protein is Major facilitator-type transporter hxnZ of Emericella nidulans (strain FGSC A4 / ATCC 38163 / CBS 112.46 / NRRL 194 / M139) (Aspergillus nidulans).